Consider the following 480-residue polypeptide: Aspartyl/glutamyl-tRNA(Asn/Gln) amidotransferase subunit B (480 aa).

This sequence belongs to the GatB/GatE family. GatB subfamily. Heterotrimer of A, B and C subunits.

The catalysed reaction is L-glutamyl-tRNA(Gln) + L-glutamine + ATP + H2O = L-glutaminyl-tRNA(Gln) + L-glutamate + ADP + phosphate + H(+). It carries out the reaction L-aspartyl-tRNA(Asn) + L-glutamine + ATP + H2O = L-asparaginyl-tRNA(Asn) + L-glutamate + ADP + phosphate + 2 H(+). In terms of biological role, allows the formation of correctly charged Asn-tRNA(Asn) or Gln-tRNA(Gln) through the transamidation of misacylated Asp-tRNA(Asn) or Glu-tRNA(Gln) in organisms which lack either or both of asparaginyl-tRNA or glutaminyl-tRNA synthetases. The reaction takes place in the presence of glutamine and ATP through an activated phospho-Asp-tRNA(Asn) or phospho-Glu-tRNA(Gln). The polypeptide is Aspartyl/glutamyl-tRNA(Asn/Gln) amidotransferase subunit B (Streptococcus thermophilus (strain ATCC BAA-250 / LMG 18311)).